The chain runs to 634 residues: Probable potassium transport system protein Kup 2 (634 aa).

The next 12 helical transmembrane spans lie at 15-35 (LTLG…LYAF), 55-75 (VLSL…VIFL), 101-121 (WVAV…DAII), 142-162 (GMSQ…LFMF), 173-193 (LFGP…LWHI), 208-228 (AVTF…AVFL), 252-272 (WLSF…ALAL), 303-323 (LVIL…TGAY), 351-371 (IYMP…VLGF), 381-401 (YGIA…LIAW), 408-428 (PVWT…FFGA), and 435-455 (EGGW…FTWL).

The protein belongs to the HAK/KUP transporter (TC 2.A.72) family.

The protein localises to the cell inner membrane. The enzyme catalyses K(+)(in) + H(+)(in) = K(+)(out) + H(+)(out). Its function is as follows. Transport of potassium into the cell. Likely operates as a K(+):H(+) symporter. The sequence is that of Probable potassium transport system protein Kup 2 from Novosphingobium aromaticivorans (strain ATCC 700278 / DSM 12444 / CCUG 56034 / CIP 105152 / NBRC 16084 / F199).